Here is a 220-residue protein sequence, read N- to C-terminus: Cytidylate kinase (220 aa).

Residue 9 to 17 participates in ATP binding; sequence GPAASGKST.

Belongs to the cytidylate kinase family. Type 1 subfamily.

Its subcellular location is the cytoplasm. It carries out the reaction CMP + ATP = CDP + ADP. The enzyme catalyses dCMP + ATP = dCDP + ADP. The chain is Cytidylate kinase from Thermotoga petrophila (strain ATCC BAA-488 / DSM 13995 / JCM 10881 / RKU-1).